Reading from the N-terminus, the 730-residue chain is Catalase-peroxidase (730 aa).

A cross-link (tryptophyl-tyrosyl-methioninium (Trp-Tyr) (with M-244)) is located at residues Trp95–Tyr218. The active-site Proton acceptor is the His96. The segment at residues Tyr218–Met244 is a cross-link (tryptophyl-tyrosyl-methioninium (Tyr-Met) (with W-95)). His259 is a heme b binding site.

This sequence belongs to the peroxidase family. Peroxidase/catalase subfamily. As to quaternary structure, homodimer or homotetramer. Heme b is required as a cofactor. Post-translationally, formation of the three residue Trp-Tyr-Met cross-link is important for the catalase, but not the peroxidase activity of the enzyme.

The catalysed reaction is H2O2 + AH2 = A + 2 H2O. It carries out the reaction 2 H2O2 = O2 + 2 H2O. In terms of biological role, bifunctional enzyme with both catalase and broad-spectrum peroxidase activity. This Clostridium botulinum (strain Eklund 17B / Type B) protein is Catalase-peroxidase.